A 654-amino-acid chain; its full sequence is Glycogen debranching enzyme (654 aa).

Catalysis depends on Asp-336, which acts as the Nucleophile. The Proton donor role is filled by Glu-371. The segment at 459-484 is disordered; that stretch reads EANGEENRDGTNSNYSDNHGKEGLGG.

This sequence belongs to the glycosyl hydrolase 13 family.

It carries out the reaction Hydrolysis of (1-&gt;6)-alpha-D-glucosidic linkages to branches with degrees of polymerization of three or four glucose residues in limit dextrin.. The protein operates within glycan degradation; glycogen degradation. In terms of biological role, removes maltotriose and maltotetraose chains that are attached by 1,6-alpha-linkage to the limit dextrin main chain, generating a debranched limit dextrin. This chain is Glycogen debranching enzyme, found in Salmonella typhi.